The sequence spans 335 residues: Glycerol-3-phosphate dehydrogenase [NAD(P)+] (335 aa).

NADPH-binding residues include Trp11, Arg30, and Lys106. Lys106, Gly135, and Ser137 together coordinate sn-glycerol 3-phosphate. Ala139 lines the NADPH pocket. The sn-glycerol 3-phosphate site is built by Lys190, Asp243, Ser253, Arg254, and Asn255. Lys190 functions as the Proton acceptor in the catalytic mechanism. Residue Arg254 coordinates NADPH. NADPH-binding residues include Val278 and Glu280.

This sequence belongs to the NAD-dependent glycerol-3-phosphate dehydrogenase family.

The protein localises to the cytoplasm. The catalysed reaction is sn-glycerol 3-phosphate + NAD(+) = dihydroxyacetone phosphate + NADH + H(+). It catalyses the reaction sn-glycerol 3-phosphate + NADP(+) = dihydroxyacetone phosphate + NADPH + H(+). It participates in membrane lipid metabolism; glycerophospholipid metabolism. Functionally, catalyzes the reduction of the glycolytic intermediate dihydroxyacetone phosphate (DHAP) to sn-glycerol 3-phosphate (G3P), the key precursor for phospholipid synthesis. This is Glycerol-3-phosphate dehydrogenase [NAD(P)+] from Paucimonas lemoignei (Pseudomonas lemoignei).